Reading from the N-terminus, the 328-residue chain is DNA repair and recombination protein RadA (328 aa).

Residue 118–125 (GEYGSGKT) coordinates ATP.

It belongs to the eukaryotic RecA-like protein family.

Involved in DNA repair and in homologous recombination. Binds and assemble on single-stranded DNA to form a nucleoprotein filament. Hydrolyzes ATP in a ssDNA-dependent manner and promotes DNA strand exchange between homologous DNA molecules. The sequence is that of DNA repair and recombination protein RadA from Desulfurococcus amylolyticus (strain DSM 18924 / JCM 16383 / VKM B-2413 / 1221n) (Desulfurococcus kamchatkensis).